The primary structure comprises 91 residues: Small ribosomal subunit protein eS24 (91 aa).

Residues 51-91 (QRRKDAAAHKEAYNAMPEAERRHLNSEKYANRKAEVSYKHR) are disordered.

It belongs to the eukaryotic ribosomal protein eS24 family.

This is Small ribosomal subunit protein eS24 from Caenorhabditis elegans.